Consider the following 519-residue polypeptide: Acetylcholine receptor subunit beta-like 2 (519 aa).

The first 18 residues, 1 to 18 (MWHWSLLCVFLLVPLANS), serve as a signal peptide directing secretion. Residues 19–244 (TAPISFEANP…ITFKLTMRRK (226 aa)) lie on the Extracellular side of the membrane. N-linked (GlcNAc...) asparagine glycosylation is present at Asn-50. A disulfide bond links Cys-154 and Cys-168. 3 helical membrane passes run 245–269 (TLFY…VFYL), 277–295 (VTLC…LLLA), and 311–332 (YLLF…VLNI). The Cytoplasmic portion of the chain corresponds to 333–462 (HFRSPSTHNM…WKFVSMVLDR (130 aa)). The chain crosses the membrane as a helical span at residues 463 to 481 (FFLWLFTLSCVFGTLAIIC).

This sequence belongs to the ligand-gated ion channel (TC 1.A.9) family. Acetylcholine receptor (TC 1.A.9.1) subfamily. CNS in embryos.

The protein localises to the postsynaptic cell membrane. The protein resides in the cell membrane. After binding acetylcholine, the AChR responds by an extensive change in conformation that affects all subunits and leads to opening of an ion-conducting channel across the plasma membrane. This chain is Acetylcholine receptor subunit beta-like 2 (nAChRbeta2), found in Drosophila melanogaster (Fruit fly).